A 674-amino-acid chain; its full sequence is MSKGLFLIWLISSFHLISFSTSSKDTSFVFNGFGQSNLALDGSATLLPNGLLQLAKDSQHQMGHAFIKKPIDFSSSKPLSFSTHFVCALVPKPGFEGGHGITFVISPTVDFTRAQPTRYMGIFNASTNGSPSSHLFAVELDTVRNPDFRETNNNHIGIDVNNPISVESAPASYFSKTAQKNVSINLSSGKPIQVWVDYHGNVLNVSVAPLEAEKPSLPLLSRSMNLSEIFSRRRLFVGFAAATGTSISYHYLLGWSFSTNRELSQLLDFSKLPQVPRPRAEHKKVQFALIIALPVILAIVVMAVLAGVYYHRKKKYAEVSEPWEKKYGTHRFSYKSLYIATKGFHKDRFLGRGGFGEVYRGDLPLNKTVAVKRVSHDGEQGMKQFVAEVVSMKSLKHRNLVPLLGYCRRKGELLLVSEYMPNGSLDQHLFDDQSPVLSWSQRFVILKGIASALFYLHTEAEQVVLHRDIKASNVMLDAELNGRLGDFGMARFHDHGGNAATTAAVGTVGYMAPELITMGASTITDVYAFGVFLLEVACGRKPVEFGVQVEKRFLIKWVCECWKKDSLLDAKDPRLGEEFVPEEVELVMKLGLLCTNIVPESRPAMGQVVLYLSGNLPLPDFSPYTLGIGSFTPVVVDAASLTVSFTSRNWSAPSASSSSANNSKDHEQPLEFKS.

Positions 1–22 (MSKGLFLIWLISSFHLISFSTS) are cleaved as a signal peptide. At 23–286 (SKDTSFVFNG…RPRAEHKKVQ (264 aa)) the chain is on the extracellular side. The tract at residues 25-258 (DTSFVFNGFG…YHYLLGWSFS (234 aa)) is legume-lectin like. Asparagine 124, asparagine 181, asparagine 185, asparagine 204, and asparagine 225 each carry an N-linked (GlcNAc...) asparagine glycan. Residues 287 to 307 (FALIIALPVILAIVVMAVLAG) form a helical membrane-spanning segment. Over 308–674 (VYYHRKKKYA…DHEQPLEFKS (367 aa)) the chain is Cytoplasmic. Residues 344–625 (FHKDRFLGRG…LPLPDFSPYT (282 aa)) form the Protein kinase domain. ATP contacts are provided by residues 350-358 (LGRGGFGEV) and lysine 372. The Proton acceptor role is filled by aspartate 468. The segment covering 649-662 (NWSAPSASSSSANN) has biased composition (low complexity). Positions 649–674 (NWSAPSASSSSANNSKDHEQPLEFKS) are disordered. Over residues 663 to 674 (SKDHEQPLEFKS) the composition is skewed to basic and acidic residues.

This sequence in the C-terminal section; belongs to the protein kinase superfamily. Ser/Thr protein kinase family. The protein in the N-terminal section; belongs to the leguminous lectin family.

The protein resides in the cell membrane. It catalyses the reaction L-seryl-[protein] + ATP = O-phospho-L-seryl-[protein] + ADP + H(+). The enzyme catalyses L-threonyl-[protein] + ATP = O-phospho-L-threonyl-[protein] + ADP + H(+). The polypeptide is Probable L-type lectin-domain containing receptor kinase I.5 (LECRK15) (Arabidopsis thaliana (Mouse-ear cress)).